Reading from the N-terminus, the 116-residue chain is Venom nerve growth factor (116 aa).

Intrachain disulfides connect cysteine 14-cysteine 78, cysteine 56-cysteine 106, and cysteine 66-cysteine 108.

It belongs to the NGF-beta family. Homodimer; non-covalently linked. Post-translationally, not glycosylated. In terms of tissue distribution, expressed by the venom gland.

The protein localises to the secreted. Its function is as follows. Nerve growth factor is important for the development and maintenance of the sympathetic and sensory nervous systems. It stimulates division and differentiation of sympathetic and embryonic sensory neurons as well as basal forebrain cholinergic neurons in the brain. Its relevance in the snake venom is not clear. However, it has been shown to inhibit metalloproteinase-dependent proteolysis of platelet glycoprotein Ib alpha, suggesting a metalloproteinase inhibition to prevent metalloprotease autodigestion and/or protection against prey proteases. Binds a lipid between the two protein chains in the homodimer. The lipid-bound form promotes histamine relase from mouse mast cells, contrary to the lipid-free form. This chain is Venom nerve growth factor, found in Naja naja (Indian cobra).